Reading from the N-terminus, the 549-residue chain is MTPEELSAAISACLKDAVSTGEIALTESAVPDAVRVERPKNRDHGDWATNIALQLSKQAGMNPREFAGILSNHLQGIPGVTGVEIAGPGFLNITVDAATAGALAKAIVEAGASYGTNQALAGRVVNMEFVSANPTGPLHIGHTRWAALGDAIARVLRASGADVTAEYYINDAGSQMNVFANSVLSRLHGRGVPEGGYPGEYIRELGDEVLKAHPGIRELTDEAALPVIRAAAYEAQMSDIKTTLAEFGVEFDVFFSEKELHDAGAIESAVARLREQGHVFDDGGAVWLRTTDFGDDKDRVMIRANGEPTYFAADAAYYLSKKDRGFTEKIYLLGADHHGYINRLKAIAACAGDDPEVNIEVLIGQLVSVNGAKLSKRAGNIIELKDLISWLGKDAVRYSLARFPADSPLTLDPELLKKHSNENPVFYVQYAHARSRGTARNAAEAGVDRSVFDASLLDHATENELLSYLGSYPSIVAKAAELREPHRVARHLEVIAGAYHRWYDACRVSPQGEEPVLDVNRTRLWLNDATSQVLANGLELLGVSAPERM.

Residues 132–142 carry the 'HIGH' region motif; that stretch reads ANPTGPLHIGH.

This sequence belongs to the class-I aminoacyl-tRNA synthetase family. Monomer.

The protein resides in the cytoplasm. It catalyses the reaction tRNA(Arg) + L-arginine + ATP = L-arginyl-tRNA(Arg) + AMP + diphosphate. The chain is Arginine--tRNA ligase from Paenarthrobacter aurescens (strain TC1).